We begin with the raw amino-acid sequence, 393 residues long: Matrix metalloproteinase-23 (393 aa).

Over 1–20 (MGRGACVPSAASGAGDRARQ) the chain is Cytoplasmic. A propeptide spanning residues 1–81 (MGRGACVPSA…PHPPVPRRRR (81 aa)) is cleaved from the precursor. Residues 21 to 41 (LGAVLGALCLFPALVLLAWPG) form a helical; Signal-anchor for type II membrane protein membrane-spanning segment. The Lumenal segment spans residues 42–393 (TPANGAGARV…TYSWRIRVRS (352 aa)). Positions 60 to 79 (TSGVLASGSLGPPHPPVPRR) are disordered. N-linked (GlcNAc...) asparagine glycosylation is found at asparagine 95 and asparagine 151. Histidine 214 is a Zn(2+) binding site. Glutamate 215 is an active-site residue. The Zn(2+) site is built by histidine 218 and histidine 224. Asparagine 235 carries N-linked (GlcNAc...) asparagine glycosylation. The ShKT domain occupies 258–292 (CLDRLFVCASWARRGFCDTRRRLMKRLCPSSCDFC). Disulfide bonds link cysteine 258–cysteine 292, cysteine 265–cysteine 285, and cysteine 274–cysteine 289. Residues 298–383 (PTVAATPPPP…VVRRRQRVLS (86 aa)) form the Ig-like C2-type domain. The N-linked (GlcNAc...) asparagine glycan is linked to asparagine 319. Cysteine 324 and cysteine 373 are disulfide-bonded.

This sequence belongs to the peptidase M10A family. Zn(2+) serves as cofactor. In terms of processing, N-glycosylated. Proteolytic cleavage might yield an active form.

Its subcellular location is the membrane. It localises to the endoplasmic reticulum membrane. Functionally, protease. May regulate the surface expression of some potassium channels by retaining them in the endoplasmic reticulum. This chain is Matrix metalloproteinase-23 (MMP23), found in Bos taurus (Bovine).